Here is a 395-residue protein sequence, read N- to C-terminus: Multidrug resistance protein MdtL (395 aa).

The next 12 membrane-spanning stretches (helical) occupy residues 4–24 (FLLC…MYLV), 42–62 (IAFS…GKIA), 69–89 (PVAI…SRAS), 93–113 (LFLS…VVAF), 131–151 (LLNG…HLIM), 158–178 (SLFY…LFIL), 217–237 (VSVI…VMGF), 247–267 (ALTA…LGLF), 271–291 (TLML…SLAH), 295–315 (VTLF…GVAM), 328–350 (VASS…LAAI), and 355–377 (AMNM…IFSV).

The protein belongs to the major facilitator superfamily. DHA1 family. MdtL (TC 2.A.1.2.22) subfamily.

The protein resides in the cell inner membrane. The chain is Multidrug resistance protein MdtL from Salmonella newport (strain SL254).